Consider the following 23-residue polypeptide: NADH-ubiquinone oxidoreductase 29 kDa subunit (23 aa).

In terms of assembly, complex I is composed of about 45 different subunits.

The protein resides in the mitochondrion inner membrane. The catalysed reaction is a ubiquinone + NADH + 5 H(+)(in) = a ubiquinol + NAD(+) + 4 H(+)(out). Transfer of electrons from NADH to the respiratory chain. The immediate electron acceptor for the enzyme is believed to be ubiquinone. The polypeptide is NADH-ubiquinone oxidoreductase 29 kDa subunit (Solanum tuberosum (Potato)).